Consider the following 268-residue polypeptide: Interleukin-1 alpha (268 aa).

Residues 1–112 constitute a propeptide that is removed on maturation; sequence MAKVPDLFED…NTEEEIIKPR (112 aa). The residue at position 82 (Lys-82) is an N6-acetyllysine. The interval 82-86 is nuclear localization signal (NLS); that stretch reads KKRRL. Residue Ser-87 is modified to Phosphoserine. Residues Asn-102 and Asn-141 are each glycosylated (N-linked (GlcNAc...) asparagine).

The protein belongs to the IL-1 family. As to quaternary structure, monomer. Interacts with TMED10; the interaction mediates the translocation from the cytoplasm into the ERGIC (endoplasmic reticulum-Golgi intermediate compartment) and thereby secretion. Interacts with IL1R1. Interacts with S100A13; this interaction is the first step in the export of IL1A, followed by direct translocation of this complex across the plasma membrane. Acetylated within its nuclear localization sequence, which impacts subcellular localization. In terms of processing, proteolytic processed by CAPN1 in a calcium-dependent manner. Cleavage from 31 kDa precursor to 18 kDa biologically active molecules. Post-translationally, phosphorylated. Phosphorylation greatly enhances susceptibility to digestion and promotes the conversion of pre-IL1A alpha to the biologically active IL1A.

It localises to the nucleus. Its subcellular location is the cytoplasm. It is found in the secreted. Functionally, cytokine constitutively present intracellularly in nearly all resting non-hematopoietic cells that plays an important role in inflammation and bridges the innate and adaptive immune systems. After binding to its receptor IL1R1 together with its accessory protein IL1RAP, forms the high affinity interleukin-1 receptor complex. Signaling involves the recruitment of adapter molecules such as MYD88, IRAK1 or IRAK4. In turn, mediates the activation of NF-kappa-B and the three MAPK pathways p38, p42/p44 and JNK pathways. Within the cell, acts as an alarmin and cell death results in its liberation in the extracellular space after disruption of the cell membrane to induce inflammation and alert the host to injury or damage. In addition to its role as a danger signal, which occurs when the cytokine is passively released by cell necrosis, directly senses DNA damage and acts as signal for genotoxic stress without loss of cell integrity. This chain is Interleukin-1 alpha (IL1A), found in Bubalus carabanensis (Swamp type water buffalo).